Consider the following 376-residue polypeptide: Succinate--CoA ligase [ADP-forming] subunit beta (376 aa).

Positions K9–D237 constitute an ATP-grasp domain. ATP is bound by residues K46, G53 to G55, V95, and E100. The Mg(2+) site is built by N192 and D206. Substrate-binding positions include N257 and G314–T316.

This sequence belongs to the succinate/malate CoA ligase beta subunit family. Heterotetramer of two alpha and two beta subunits. It depends on Mg(2+) as a cofactor.

It carries out the reaction succinate + ATP + CoA = succinyl-CoA + ADP + phosphate. The catalysed reaction is GTP + succinate + CoA = succinyl-CoA + GDP + phosphate. It participates in carbohydrate metabolism; tricarboxylic acid cycle; succinate from succinyl-CoA (ligase route): step 1/1. Its function is as follows. Succinyl-CoA synthetase functions in the citric acid cycle (TCA), coupling the hydrolysis of succinyl-CoA to the synthesis of either ATP or GTP and thus represents the only step of substrate-level phosphorylation in the TCA. The beta subunit provides nucleotide specificity of the enzyme and binds the substrate succinate, while the binding sites for coenzyme A and phosphate are found in the alpha subunit. This Bacteroides thetaiotaomicron (strain ATCC 29148 / DSM 2079 / JCM 5827 / CCUG 10774 / NCTC 10582 / VPI-5482 / E50) protein is Succinate--CoA ligase [ADP-forming] subunit beta.